Consider the following 332-residue polypeptide: Glycerol-3-phosphate dehydrogenase [NAD(P)+] (332 aa).

NADPH-binding residues include tryptophan 13, lysine 34, and lysine 108. Positions 108, 136, and 138 each coordinate sn-glycerol 3-phosphate. Residue alanine 140 participates in NADPH binding. Positions 191, 244, 254, 255, and 256 each coordinate sn-glycerol 3-phosphate. Residue lysine 191 is the Proton acceptor of the active site. An NADPH-binding site is contributed by arginine 255. NADPH-binding residues include valine 279 and glutamate 281.

Belongs to the NAD-dependent glycerol-3-phosphate dehydrogenase family.

It localises to the cytoplasm. It catalyses the reaction sn-glycerol 3-phosphate + NAD(+) = dihydroxyacetone phosphate + NADH + H(+). The enzyme catalyses sn-glycerol 3-phosphate + NADP(+) = dihydroxyacetone phosphate + NADPH + H(+). It participates in membrane lipid metabolism; glycerophospholipid metabolism. Its function is as follows. Catalyzes the reduction of the glycolytic intermediate dihydroxyacetone phosphate (DHAP) to sn-glycerol 3-phosphate (G3P), the key precursor for phospholipid synthesis. This Francisella tularensis subsp. mediasiatica (strain FSC147) protein is Glycerol-3-phosphate dehydrogenase [NAD(P)+].